The sequence spans 328 residues: Beta-ketoacyl-[acyl-carrier-protein] synthase III (328 aa).

Catalysis depends on residues C122 and H255. The tract at residues 256-260 is ACP-binding; sequence QANVR. The active site involves N285.

This sequence belongs to the thiolase-like superfamily. FabH family. In terms of assembly, homodimer.

The protein localises to the cytoplasm. It carries out the reaction malonyl-[ACP] + acetyl-CoA + H(+) = 3-oxobutanoyl-[ACP] + CO2 + CoA. Its pathway is lipid metabolism; fatty acid biosynthesis. Catalyzes the condensation reaction of fatty acid synthesis by the addition to an acyl acceptor of two carbons from malonyl-ACP. Catalyzes the first condensation reaction which initiates fatty acid synthesis and may therefore play a role in governing the total rate of fatty acid production. Possesses both acetoacetyl-ACP synthase and acetyl transacylase activities. Its substrate specificity determines the biosynthesis of branched-chain and/or straight-chain of fatty acids. This chain is Beta-ketoacyl-[acyl-carrier-protein] synthase III, found in Bordetella petrii (strain ATCC BAA-461 / DSM 12804 / CCUG 43448).